The primary structure comprises 183 residues: Mast cell-expressed membrane protein 1 (183 aa).

The segment at 1-26 (MHASASQDKNRRKPGHDEGAHNPDYE) is disordered. Residues 1–70 (MHASASQDKN…PPWLYRTIMM (70 aa)) lie on the Cytoplasmic side of the membrane. The segment covering 15–24 (GHDEGAHNPD) has biased composition (basic and acidic residues). A helical; Signal-anchor for type II membrane protein membrane pass occupies residues 71–91 (LYVLLALVFLSCIVLSALVLV). Residues 92-183 (KNSEMSKELW…EKKAQPQPST (92 aa)) are Extracellular-facing. N-linked (GlcNAc...) asparagine glycosylation is present at N109.

The protein localises to the membrane. The polypeptide is Mast cell-expressed membrane protein 1 (Mus musculus (Mouse)).